Reading from the N-terminus, the 658-residue chain is NUAK family SNF1-like kinase 1 (658 aa).

At Met-1 the chain carries N-acetylmethionine. The disordered stretch occupies residues 1–53 (MEGAAVSAAGDGPAVETGLPGSPLEAVAGATAAPVEPRKPHGVKRHHHKHNLK). The residue at position 22 (Ser-22) is a Phosphoserine. The span at 40–53 (PHGVKRHHHKHNLK) shows a compositional bias: basic residues. The Protein kinase domain occupies 56–307 (YELQETLGKG…IEDIANHWWV (252 aa)). ATP is bound by residues 62-70 (LGKGTYGKV) and Lys-85. Asp-179 functions as the Proton acceptor in the catalytic mechanism. The residue at position 212 (Thr-212) is a Phosphothreonine; by LKB1. 2 disordered regions span residues 353 to 422 (LAKP…EGIV) and 441 to 568 (IPLP…SYSR). Residues 378 to 393 (FPQSGQDSVPESPSKL) show a composition bias toward polar residues. Over residues 394-405 (SSKRPKGILKKR) the composition is skewed to basic residues. A GILK motif motif is present at residues 400–403 (GILK). A Phosphoserine modification is found at Ser-456. The span at 519–530 (SCRRKGILKHSS) shows a compositional bias: basic residues. The segment covering 559–568 (SDGISRSYSR) has biased composition (low complexity). The residue at position 601 (Ser-601) is a Phosphoserine; by PKB/AKT1.

This sequence belongs to the protein kinase superfamily. CAMK Ser/Thr protein kinase family. SNF1 subfamily. Interacts (via GILK motif) with PPP1CB; the interaction is direct and bridges NUAK1 and PPP1R12A. Interacts with CDKN1A. It depends on Mg(2+) as a cofactor. Post-translationally, phosphorylated at Thr-212 by STK11/LKB1 in complex with STE20-related adapter-alpha (STRADA) pseudo kinase and CAB39. Not dephosphorylated by the myosin PP1 complex when regulating its activity, due to the presence of PPP1R12A, which prevents myosin PP1 from dephosphorylating NUAK1. Phosphorylated by STK38L upon stimulation with IGF1. In terms of processing, ubiquitinated with 'Lys-29'- and 'Lys-33'-linked polyubiquitins which appear to impede LKB1-mediated phosphorylation. Deubiquitinated by USP9X. Expressed in the developing central nervous system, in epidermis, and some other tissues.

The protein localises to the nucleus. It localises to the cytoplasm. It catalyses the reaction L-seryl-[protein] + ATP = O-phospho-L-seryl-[protein] + ADP + H(+). It carries out the reaction L-threonyl-[protein] + ATP = O-phospho-L-threonyl-[protein] + ADP + H(+). Its activity is regulated as follows. Activated by phosphorylation on Thr-212. Activated by phosphorylation at Ser-601 AKT1 during glucose starvation; the relevance of such activation in normal cells is however unsure. Serine/threonine-protein kinase involved in various processes such as cell adhesion, regulation of cell ploidy and senescence, cell proliferation and tumor progression. Phosphorylates ATM, CASP6, LATS1, PPP1R12A and p53/TP53. Acts as a regulator of cellular senescence and cellular ploidy by mediating phosphorylation of 'Ser-464' of LATS1, thereby controlling its stability. Controls cell adhesion by regulating activity of the myosin protein phosphatase 1 (PP1) complex. Acts by mediating phosphorylation of PPP1R12A subunit of myosin PP1: phosphorylated PPP1R12A then interacts with 14-3-3, leading to reduced dephosphorylation of myosin MLC2 by myosin PP1. May be involved in DNA damage response: phosphorylates p53/TP53 at 'Ser-15' and 'Ser-392' and is recruited to the CDKN1A/WAF1 promoter to participate in transcription activation by p53/TP53. May also act as a tumor malignancy-associated factor by promoting tumor invasion and metastasis under regulation and phosphorylation by AKT1. Suppresses Fas-induced apoptosis by mediating phosphorylation of CASP6, thereby suppressing the activation of the caspase and the subsequent cleavage of CFLAR. Regulates UV radiation-induced DNA damage response mediated by CDKN1A. In association with STK11, phosphorylates CDKN1A in response to UV radiation and contributes to its degradation which is necessary for optimal DNA repair. The chain is NUAK family SNF1-like kinase 1 (Nuak1) from Mus musculus (Mouse).